The chain runs to 352 residues: Lipid storage droplets surface-binding protein 2 (352 aa).

Disordered regions lie at residues 1 to 28 (MASA…DQPK) and 298 to 352 (NVEQ…VSSQ). Positions 298 to 309 (NVEQSGGSSSDA) are enriched in polar residues. Low complexity predominate over residues 315 to 329 (TTTSTTTTTTTSSTS).

Belongs to the perilipin family. Ubiquitous expression in early embryos. At stage 5 expression is restricted to the pole cells. At stage 11 expression is seen in the amnioserosa, refined to the fat body and midgut by stage 14. Also seen in the hindgut by the end of embryogenesis. Expression is seen in larval fat body (at protein level).

It is found in the cytoplasm. Its subcellular location is the lipid droplet. Essential for embryogenesis. Required for normal deposition of neutral lipids in the oocyte. The protein is Lipid storage droplets surface-binding protein 2 of Drosophila melanogaster (Fruit fly).